A 239-amino-acid polypeptide reads, in one-letter code: tRNA1(Val) (adenine(37)-N6)-methyltransferase (239 aa).

It belongs to the methyltransferase superfamily. tRNA (adenine-N(6)-)-methyltransferase family.

It localises to the cytoplasm. It carries out the reaction adenosine(37) in tRNA1(Val) + S-adenosyl-L-methionine = N(6)-methyladenosine(37) in tRNA1(Val) + S-adenosyl-L-homocysteine + H(+). Functionally, specifically methylates the adenine in position 37 of tRNA(1)(Val) (anticodon cmo5UAC). This chain is tRNA1(Val) (adenine(37)-N6)-methyltransferase, found in Vibrio vulnificus (strain YJ016).